A 151-amino-acid polypeptide reads, in one-letter code: uncharacterized protein (151 aa).

A run of 3 helical transmembrane segments spans residues Gly14–Ile34, Ile45–Ile65, and Val91–Ile111.

It is found in the cell membrane. This is an uncharacterized protein from Bacillus subtilis (strain 168).